The sequence spans 427 residues: MSAIVDIVGREVLDSRGNPTVECDVLLESGVMGRAAVPSGASTGSREAIELRDGDKSRYLGKGVLNAVKNINTEISEAVLGLDAAEQSFLDKTLIDLDGTDNKGRLGANAMLAVSMAVARAAAEESGLPLYRYFGGMGAVQLPVPMMNVINGGAHANNSLDLQEMMIIPVGAPSFREAVRWGAEVFHALKKILHDKGISTAVGDEGGFAPSVESHEAAIQLILQAIDKAGYRAGEQIALGLDCAASEFYKDGKYHLEGEGLSLTAQEWTDMMAAWVDKYPIISIEDGMAEGDWDGWKLLTDRLGKNVQIVGDDLFVTNTKILKEGIEKGIANSILIKINQIGTLSETFAAIEMAKRAGYTAVISHRSGETEDSTIADIAVATNAGQIKTGSMSRSDRMAKYNQLLRIEEDLGDVAVYPGRAAFYNLR.

A (2R)-2-phosphoglycerate-binding site is contributed by Q163. The active-site Proton donor is E205. D242, E285, and D312 together coordinate Mg(2+). (2R)-2-phosphoglycerate is bound by residues K337, R366, S367, and K388. K337 acts as the Proton acceptor in catalysis.

It belongs to the enolase family. Requires Mg(2+) as cofactor.

Its subcellular location is the cytoplasm. The protein localises to the secreted. The protein resides in the cell surface. The enzyme catalyses (2R)-2-phosphoglycerate = phosphoenolpyruvate + H2O. Its pathway is carbohydrate degradation; glycolysis; pyruvate from D-glyceraldehyde 3-phosphate: step 4/5. Catalyzes the reversible conversion of 2-phosphoglycerate (2-PG) into phosphoenolpyruvate (PEP). It is essential for the degradation of carbohydrates via glycolysis. This Leptothrix cholodnii (strain ATCC 51168 / LMG 8142 / SP-6) (Leptothrix discophora (strain SP-6)) protein is Enolase.